The primary structure comprises 297 residues: Probable transcription factor vicR (297 aa).

Disordered regions lie at residues 45 to 80 and 100 to 134; these read LPGL…HSET and TNQA…KNVH. The segment covering 58–67 has biased composition (basic and acidic residues); it reads QKEEMRRKNA. Over residues 69–80 the composition is skewed to polar residues; the sequence is AQMQNDSNHSET. A compositionally biased stretch (basic and acidic residues) spans 110-124; sequence RSREDITNSRAERHS.

The protein resides in the nucleus. Its function is as follows. Probable transcription factor; part of the gene cluster that mediates the biosynthesis of the secondary metabolite victorin, the molecular basis for Victoria blight of oats. May play a role in the regulation of the production of victorin. This chain is Probable transcription factor vicR, found in Bipolaris victoriae (strain FI3) (Victoria blight of oats agent).